The primary structure comprises 151 residues: uncharacterized protein (151 aa).

This is an uncharacterized protein from Acanthamoeba polyphaga mimivirus (APMV).